We begin with the raw amino-acid sequence, 920 residues long: Plasma membrane ATPase (920 aa).

Positions 1-11 are enriched in basic and acidic residues; it reads MSDERITEKPP. The disordered stretch occupies residues 1–71; that stretch reads MSDERITEKP…AEEDDGPAAA (71 aa). At 1–117 the chain is on the cytoplasmic side; sequence MSDERITEKP…REESENLLVK (117 aa). Residues 17-50 show a composition bias toward acidic residues; the sequence is SEGEPVPEEEVEEETEEEVPDEQSSEDDDIDGLI. A helical membrane pass occupies residues 118–138; the sequence is FLMFFIGPIQFVMEAAAVLAA. The Extracellular portion of the chain corresponds to 139–142; sequence GLED. Residues 143-162 traverse the membrane as a helical segment; sequence WVDFGVICGLLFLNAGVGFI. Residues 163–293 are Cytoplasmic-facing; it reads QEFQAGSIVE…GQGHFTEVLN (131 aa). A helical membrane pass occupies residues 294 to 315; it reads GIGVILLVLVVITLLLIWTACF. The Extracellular portion of the chain corresponds to 316–326; sequence YRTVRIVPILR. Residues 327 to 349 form a helical membrane-spanning segment; it reads YTLGITIVGVPVGLPAVVTTTMA. The Cytoplasmic portion of the chain corresponds to 350-721; that stretch reads GGAAYLAKKQ…IAILNHSLDI (372 aa). Asp380 functions as the 4-aspartylphosphate intermediate in the catalytic mechanism. Positions 636 and 640 each coordinate Mg(2+). A helical membrane pass occupies residues 722–740; that stretch reads DLIVFIAIFADVATLAIAY. Over 741–756 the chain is Extracellular; that stretch reads DNAPFSPSPVKWNLPR. A helical transmembrane segment spans residues 757 to 776; that stretch reads LWGMSIMMGIILAAGTWITL. The Cytoplasmic portion of the chain corresponds to 777–826; it reads TTMFLPKGGIIQNFGSIDGILFLEISLTENWLIFITRAVGPFWSSIPSWQ. The chain crosses the membrane as a helical span at residues 827 to 847; that stretch reads LAGAVFVVDVVATMFTLFGWW. Over 848 to 859 the chain is Extracellular; it reads SQNWTDIVTVVR. A helical membrane pass occupies residues 860–876; sequence IYIWSIGIFCCLGGAYY. The Cytoplasmic segment spans residues 877–920; sequence LMSESETFDRLMNGKPLKENKSTRSVEDFLASMRRVSTQHEKGN.

This sequence belongs to the cation transport ATPase (P-type) (TC 3.A.3) family. Type IIIA subfamily.

Its subcellular location is the cell membrane. It carries out the reaction ATP + H2O + H(+)(in) = ADP + phosphate + 2 H(+)(out). The plasma membrane ATPase of plants and fungi is a hydrogen ion pump. The proton gradient it generates drives the active transport of nutrients by H(+)-symport. The resulting external acidification and/or internal alkinization may mediate growth responses. The sequence is that of Plasma membrane ATPase from Zygosaccharomyces rouxii.